A 185-amino-acid polypeptide reads, in one-letter code: MLTLASKLKRDDGVKGSRTSSTTSDSTRRVSVRDRLLVKEVAELEANLPCTCKVNFPDPNKLHYFHLTVSPDESYYQGGRFQFEIEVPDAYNMVPPKVKCLTRIWHPNITETGEICLSLLREHSIDGTGWAPTRTLKDVVWGLNSLFTDLLNFDDPLNIEAAEHHLRDKDEYRNKVEDYIKRYAR.

A disordered region spans residues 1-29 (MLTLASKLKRDDGVKGSRTSSTTSDSTRR). Residues 1 to 29 (MLTLASKLKRDDGVKGSRTSSTTSDSTRR) are interaction with uba3. A UBC core domain is found at 32–185 (VRDRLLVKEV…VEDYIKRYAR (154 aa)). Cysteine 116 functions as the Glycyl thioester intermediate in the catalytic mechanism.

This sequence belongs to the ubiquitin-conjugating enzyme family. UBE2F subfamily.

It carries out the reaction [E1 NEDD8-activating enzyme]-S-[NEDD8 protein]-yl-L-cysteine + [E2 NEDD8-conjugating enzyme]-L-cysteine = [E1 NEDD8-activating enzyme]-L-cysteine + [E2 NEDD8-conjugating enzyme]-S-[NEDD8-protein]-yl-L-cysteine.. It functions in the pathway protein modification; protein neddylation. Its function is as follows. Accepts the ubiquitin-like protein NEDD8 from the UBA3-NAE1 E1 complex and catalyzes its covalent attachment to other proteins. Together with the E3 ubiquitin ligase rnf7/rbx2, specifically neddylates cullin-5 (cul5). Does not neddylate cul1, cul2, cul3, cul4a or cul4b. This chain is NEDD8-conjugating enzyme UBE2F (ube2f), found in Xenopus tropicalis (Western clawed frog).